The following is a 753-amino-acid chain: Catalase-peroxidase (753 aa).

The segment at residues 90 to 238 is a cross-link (tryptophyl-tyrosyl-methioninium (Trp-Tyr) (with M-264)); it reads WHSAGTYRVT…LASSHMGLIY (149 aa). His-91 (proton acceptor) is an active-site residue. The disordered stretch occupies residues 196–220; the sequence is SEGQEGHEGHGVVQGDESKKQHTDI. A cross-link (tryptophyl-tyrosyl-methioninium (Tyr-Met) (with W-90)) is located at residues 238–264; sequence YVNPEGPDGIPDPVASAKDIRVTFGRM. Heme b is bound at residue His-279.

The protein belongs to the peroxidase family. Peroxidase/catalase subfamily. As to quaternary structure, homodimer or homotetramer. It depends on heme b as a cofactor. Post-translationally, formation of the three residue Trp-Tyr-Met cross-link is important for the catalase, but not the peroxidase activity of the enzyme.

The protein localises to the cytoplasm. It carries out the reaction H2O2 + AH2 = A + 2 H2O. It catalyses the reaction 2 H2O2 = O2 + 2 H2O. Inhibited by KCN. Functionally, bifunctional enzyme with both catalase and broad-spectrum peroxidase activity. This is Catalase-peroxidase from Neurospora crassa (strain ATCC 24698 / 74-OR23-1A / CBS 708.71 / DSM 1257 / FGSC 987).